The following is a 241-amino-acid chain: Small ribosomal subunit protein uS2 (241 aa).

The protein belongs to the universal ribosomal protein uS2 family.

This is Small ribosomal subunit protein uS2 from Enterobacter sp. (strain 638).